A 548-amino-acid polypeptide reads, in one-letter code: Frizzled-7-B (548 aa).

Residues 1 to 18 (MLAPVSLLFCLFLQLCPS) form the signal peptide. Residues 19 to 230 (AQQYHGEKGI…EEEVRFARLW (212 aa)) are Extracellular-facing. One can recognise an FZ domain in the interval 31 to 150 (PDHGFCQPIS…HGAGEICVGQ (120 aa)). 5 cysteine pairs are disulfide-bonded: Cys36-Cys97, Cys44-Cys90, Cys81-Cys118, Cys107-Cys147, and Cys111-Cys135. Residue Asn50 is glycosylated (N-linked (GlcNAc...) asparagine). Asn151 is a glycosylation site (N-linked (GlcNAc...) asparagine). A helical membrane pass occupies residues 231–251 (VGIWAILCGISTLFTVLTYLV). Topologically, residues 252-262 (DMRRFSYPERP) are cytoplasmic. The chain crosses the membrane as a helical span at residues 263–283 (IIFLSGCYFMVAVAYTAGFLL). At 284 to 311 (EERAVCVERFSEDSYRTVAQGTKKEGCT) the chain is on the extracellular side. The chain crosses the membrane as a helical span at residues 312–332 (ILFMILYFFGMASSIWWVILA). Residues 333 to 353 (LTWFLSAGMKWGHEAIEANSQ) are Cytoplasmic-facing. Residues 354–374 (YFHLAAWAVPAVKTITILAMG) traverse the membrane as a helical segment. Over 375–397 (QVDGDVLSGVCYVGINSVDSLRG) the chain is Extracellular. Residues 398–418 (FVLAPLFVYLFLGTSFLLAGF) traverse the membrane as a helical segment. The Cytoplasmic segment spans residues 419–444 (VSLFRIRTIMKHDGTKTEKLEKLMVR). A helical transmembrane segment spans residues 445-465 (IGVFSVMYTVPATIVLACYFY). The Extracellular segment spans residues 466 to 502 (EQAFRDTWEKTWLVHTCKGYAVPCPNYNFAPMSPDFT). Residues 503–523 (VFMIKYLMTMIVGITSSFWIW) form a helical membrane-spanning segment. Topologically, residues 524 to 548 (SGKTLQSWRRFYHRLGNGSKGETAV) are cytoplasmic. The Lys-Thr-X-X-X-Trp motif, mediates interaction with the PDZ domain of Dvl family members signature appears at 526 to 531 (KTLQSW). Residues 546 to 548 (TAV) carry the PDZ-binding motif.

It belongs to the G-protein coupled receptor Fz/Smo family. In terms of assembly, interacts with wnt11 and sdc4. The extracellular domain interacts with the extracellular domain of pcdh8/papc. Interacts (via C-terminus) with dvl1 (via PDZ domain). During gastrulation, broadly expressed on the dorsal side of the embryo in deep mesodermal cells surrounding the blastopore lip and in presumptive anterior neuroectoderm. During neurulation, localized to the cranial neural crest and heart field where expression is retained at later stages in addition to new areas of expression in the neural tube, pronephros and tailbud. At tailbud stage, expressed in the pronephric duct, and broad head expression becomes more restricted to the hindbrain. In tadpoles, strongly expressed in the eye and the pericardium and myocardium of the developing heart.

It localises to the cell membrane. It is found in the endosome membrane. Receptor for Wnt proteins. Acts in both canonical and non-canonical Wnt pathways. Although different papers report differing Wnt preferences, wnt5a, wnt8b and wnt11 have been proposed as synergists. In the canonical Wnt pathway, acts via beta-catenin to promote the expression of the dorsal genes siamois, twin and nodal3 and to establish the dorsal axis of the embryo and induce dorsal mesoderm formation. In a non-canonical Wnt/planar cell polarity (PCP) pathway, acts with sdc4 and dvl2/dsh to regulate convergent extension cell movements during gastrulation. Triggers phosphorylation of dvl2/dsh and its translocation to the plasma membrane. In a third branch of Wnt signaling, acts in a non-canonical pathway via trimeric G proteins, and independently of dvl2/dsh, to recruit protein kinase C (PKC) to the membrane and thus activate PKC. PKC signaling controls cell sorting and tissue separation during gastrulation. This is Frizzled-7-B (fzd7-b) from Xenopus laevis (African clawed frog).